The following is a 379-amino-acid chain: Origin of replication complex subunit 2 (379 aa).

The tract at residues 1 to 25 (MALRGGHAAAAAGVSSGSEDDDEEA) is disordered. Positions 8-17 (AAAAAGVSSG) are enriched in low complexity.

The protein belongs to the ORC2 family. As to quaternary structure, component of the origin recognition complex (ORC) composed of at least ORC1, ORC2, ORC3, ORC4, ORC5 and ORC6. ORC is regulated in a cell-cycle and development dependent manner. It is sequentially assembled at the exit from anaphase of mitosis and disassembled as cells enter S phase.

It is found in the nucleus. In terms of biological role, essential protein. Component of the origin recognition complex (ORC) that binds origins of replication. DNA-binding is ATP-dependent, however specific DNA sequences that define origins of replication have not been identified so far. ORC is required to assemble the pre-replication complex necessary to initiate DNA replication. The protein is Origin of replication complex subunit 2 of Oryza sativa subsp. indica (Rice).